The sequence spans 464 residues: 3-isopropylmalate dehydratase large subunit (464 aa).

The [4Fe-4S] cluster site is built by Cys-337, Cys-397, and Cys-400.

The protein belongs to the aconitase/IPM isomerase family. LeuC type 1 subfamily. Heterodimer of LeuC and LeuD. Requires [4Fe-4S] cluster as cofactor.

It catalyses the reaction (2R,3S)-3-isopropylmalate = (2S)-2-isopropylmalate. The protein operates within amino-acid biosynthesis; L-leucine biosynthesis; L-leucine from 3-methyl-2-oxobutanoate: step 2/4. Catalyzes the isomerization between 2-isopropylmalate and 3-isopropylmalate, via the formation of 2-isopropylmaleate. The sequence is that of 3-isopropylmalate dehydratase large subunit from Bacillus thuringiensis (strain Al Hakam).